The chain runs to 454 residues: MSDNDTIVAQATPPGRGGVGILRISGFKAREVAETVLGKLPKPRYADYLPFKDADGSVLDQGIALWFPGPNSFTGEDVLELQGHGGPVILDLLLKRILTIPGLRIARPGEFSERAFLNDKLDLAQAEAIADLIDASSEQAARSALNSLQGAFSARVNHLVEALTHLRIYVEAAIDFPDEEIDFLSDGKIEAQLNDVIADLDAVRAEARQGSLLREGMKVVIAGRPNAGKSSLLNALAGREAAIVTDIAGTTRDVLREHIHIDGMPLHIIDTAGLREASDEVERIGIERAWQEIEQADRVLFMVDGTTTDAVDPAEIWPEFIARLPAKLPITVVRNKADITGETLGMSEVNGHALIRLSARTGEGVDVLRNHLKQSMGFDTNMEGGFLARRRHLQALEQAAEHLQQGKAQLLGAWAGELLAEELRLAQQNLSEITGEFTSDDLLGRIFSSFCIGK.

(6S)-5-formyl-5,6,7,8-tetrahydrofolate-binding residues include arginine 23, glutamate 80, and lysine 120. The 162-residue stretch at 216–377 (GMKVVIAGRP…LRNHLKQSMG (162 aa)) folds into the TrmE-type G domain. K(+) is bound at residue asparagine 226. GTP contacts are provided by residues 226 to 231 (NAGKSS), 245 to 251 (TDIAGTT), 270 to 273 (DTAG), 335 to 338 (NKAD), and 358 to 360 (SAR). Serine 230 is a Mg(2+) binding site. Threonine 245, isoleucine 247, and threonine 250 together coordinate K(+). Position 251 (threonine 251) interacts with Mg(2+). Lysine 454 contributes to the (6S)-5-formyl-5,6,7,8-tetrahydrofolate binding site.

It belongs to the TRAFAC class TrmE-Era-EngA-EngB-Septin-like GTPase superfamily. TrmE GTPase family. As to quaternary structure, homodimer. Heterotetramer of two MnmE and two MnmG subunits. K(+) is required as a cofactor.

It is found in the cytoplasm. Functionally, exhibits a very high intrinsic GTPase hydrolysis rate. Involved in the addition of a carboxymethylaminomethyl (cmnm) group at the wobble position (U34) of certain tRNAs, forming tRNA-cmnm(5)s(2)U34. In Shigella boydii serotype 18 (strain CDC 3083-94 / BS512), this protein is tRNA modification GTPase MnmE.